The following is a 274-amino-acid chain: Methylamine utilization protein MauF (274 aa).

7 helical membrane-spanning segments follow: residues 30-50 (WTRA…ALAM), 52-72 (AAHV…LSTW), 105-125 (LGYA…GGIA), 127-147 (LSGF…LAYG), 176-196 (WVVG…YVQT), 202-222 (VTAA…IAIF), and 253-273 (AAIA…MLAL).

The protein resides in the cell membrane. It functions in the pathway one-carbon metabolism; methylamine degradation. This Paracoccus versutus (Thiobacillus versutus) protein is Methylamine utilization protein MauF (mauF).